Reading from the N-terminus, the 377-residue chain is Acetylornithine aminotransferase (377 aa).

Pyridoxal 5'-phosphate contacts are provided by residues G94–T95 and F121. R124 is a binding site for N(2)-acetyl-L-ornithine. D206–Q209 provides a ligand contact to pyridoxal 5'-phosphate. K235 carries the N6-(pyridoxal phosphate)lysine modification. S263 contacts N(2)-acetyl-L-ornithine. Position 264 (T264) interacts with pyridoxal 5'-phosphate.

The protein belongs to the class-III pyridoxal-phosphate-dependent aminotransferase family. ArgD subfamily. Homodimer. The cofactor is pyridoxal 5'-phosphate.

It is found in the cytoplasm. It catalyses the reaction N(2)-acetyl-L-ornithine + 2-oxoglutarate = N-acetyl-L-glutamate 5-semialdehyde + L-glutamate. Its pathway is amino-acid biosynthesis; L-arginine biosynthesis; N(2)-acetyl-L-ornithine from L-glutamate: step 4/4. This Lactococcus lactis subsp. lactis (strain IL1403) (Streptococcus lactis) protein is Acetylornithine aminotransferase.